Reading from the N-terminus, the 975-residue chain is Protein bicaudal D homolog 1 (975 aa).

Coiled-coil stretches lie at residues 1–265 and 319–496; these read MAAE…HISI and SELN…IANE. 5 disordered regions span residues 383–403, 545–616, 800–824, 836–877, and 922–975; these read SSKELKAELDGEKGRDSGEEA, RSGS…LDTS, DHEQSRRSKGKLGKSKIGSPKVSGE, LLHS…ASYL, and DCQQ…PPHP. Basic and acidic residues-rich tracts occupy residues 385 to 403 and 581 to 590; these read KELKAELDGEKGRDSGEEA and VAKESTEASK. Residues 592–602 show a composition bias toward polar residues; that stretch reads PSPTKTPTISP. Positions 663–803 form a coiled coil; sequence IDKDKEALME…LEDLEFDHEQ (141 aa). An interaction with RAB6A region spans residues 663–803; it reads IDKDKEALME…LEDLEFDHEQ (141 aa). Residues 840 to 877 are compositionally biased toward polar residues; that stretch reads QGPQTPNIRVSSGTQRKRQFSPSLCDQSRPRTSGASYL.

The protein belongs to the BicD family. In terms of assembly, interacts with RAB6A. Interacts (via C-terminus) with RAB6B (GTP-bound); the interaction is direct. Interacts with CLIP-115 and KIFC2. As to quaternary structure, (Microbial infection) Interacts with human cytomegalovirus/HHV-5 protein UL32. Expressed in the brain, heart and skeletal muscle.

It localises to the golgi apparatus. In terms of biological role, regulates coat complex coatomer protein I (COPI)-independent Golgi-endoplasmic reticulum transport by recruiting the dynein-dynactin motor complex. This chain is Protein bicaudal D homolog 1 (BICD1), found in Homo sapiens (Human).